Reading from the N-terminus, the 194-residue chain is Pyridoxal 5'-phosphate synthase subunit PdxT (194 aa).

Residue 50–52 coordinates L-glutamine; sequence GES. The active-site Nucleophile is Cys82. Residues Arg109 and 136 to 137 contribute to the L-glutamine site; that span reads IR. Residues His172 and Glu174 each act as charge relay system in the active site.

It belongs to the glutaminase PdxT/SNO family. As to quaternary structure, in the presence of PdxS, forms a dodecamer of heterodimers. Only shows activity in the heterodimer.

The enzyme catalyses aldehydo-D-ribose 5-phosphate + D-glyceraldehyde 3-phosphate + L-glutamine = pyridoxal 5'-phosphate + L-glutamate + phosphate + 3 H2O + H(+). It carries out the reaction L-glutamine + H2O = L-glutamate + NH4(+). Its pathway is cofactor biosynthesis; pyridoxal 5'-phosphate biosynthesis. Its function is as follows. Catalyzes the hydrolysis of glutamine to glutamate and ammonia as part of the biosynthesis of pyridoxal 5'-phosphate. The resulting ammonia molecule is channeled to the active site of PdxS. The sequence is that of Pyridoxal 5'-phosphate synthase subunit PdxT from Streptococcus pneumoniae (strain CGSP14).